Reading from the N-terminus, the 31-residue chain is Cytochrome b6-f complex subunit 6 (31 aa).

Residues 4–26 form a helical membrane-spanning segment; the sequence is ITSYFGFLLAASTITPALLIGLS.

The protein belongs to the PetL family. As to quaternary structure, the 4 large subunits of the cytochrome b6-f complex are cytochrome b6, subunit IV (17 kDa polypeptide, PetD), cytochrome f and the Rieske protein, while the 4 small subunits are PetG, PetL, PetM and PetN. The complex functions as a dimer.

The protein localises to the plastid. It is found in the chloroplast thylakoid membrane. Functionally, component of the cytochrome b6-f complex, which mediates electron transfer between photosystem II (PSII) and photosystem I (PSI), cyclic electron flow around PSI, and state transitions. PetL is important for photoautotrophic growth as well as for electron transfer efficiency and stability of the cytochrome b6-f complex. The protein is Cytochrome b6-f complex subunit 6 of Liriodendron tulipifera (Tuliptree).